The sequence spans 471 residues: Membrane-associated sulfotransferase kil1 (471 aa).

Residues 1-12 are Cytoplasmic-facing; sequence MSTTSMILTKKN. Residues 13 to 33 traverse the membrane as a helical; Signal-anchor for type II membrane protein segment; the sequence is IIILSIIIITIIAYQFYITSP. Topologically, residues 34–471 are lumenal; the sequence is QSFPSSNTIT…LLNRDFKWQN (438 aa). An N-linked (GlcNAc...) asparagine glycan is attached at Asn-47. Low complexity-rich tracts occupy residues 89 to 105 and 112 to 127; these read NQNENQNQINNEYNNNK and NNNNNNYNNNNNNNNN. Residues 89–127 form a disordered region; it reads NQNENQNQINNEYNNNKLNDEQENNNNNNYNNNNNNNNN. 3'-phosphoadenylyl sulfate contacts are provided by residues 167-172, Arg-252, and Ser-260; that span reads KSGTTF. N-linked (GlcNAc...) asparagine glycosylation is found at Asn-324 and Asn-344. Tyr-348 contributes to the 3'-phosphoadenylyl sulfate binding site.

This sequence belongs to the sulfotransferase 1 family.

The protein localises to the membrane. In terms of biological role, sulfotransferase involved in intracellular killing of bacteria. The polypeptide is Membrane-associated sulfotransferase kil1 (kil1) (Dictyostelium discoideum (Social amoeba)).